The sequence spans 529 residues: Bifunctional purine biosynthesis protein PurH (529 aa).

The region spanning 1 to 146 is the MGS-like domain; that stretch reads MAPTALLSVS…KNHAHVAVLT (146 aa).

It belongs to the PurH family.

The enzyme catalyses (6R)-10-formyltetrahydrofolate + 5-amino-1-(5-phospho-beta-D-ribosyl)imidazole-4-carboxamide = 5-formamido-1-(5-phospho-D-ribosyl)imidazole-4-carboxamide + (6S)-5,6,7,8-tetrahydrofolate. It carries out the reaction IMP + H2O = 5-formamido-1-(5-phospho-D-ribosyl)imidazole-4-carboxamide. It participates in purine metabolism; IMP biosynthesis via de novo pathway; 5-formamido-1-(5-phospho-D-ribosyl)imidazole-4-carboxamide from 5-amino-1-(5-phospho-D-ribosyl)imidazole-4-carboxamide (10-formyl THF route): step 1/1. Its pathway is purine metabolism; IMP biosynthesis via de novo pathway; IMP from 5-formamido-1-(5-phospho-D-ribosyl)imidazole-4-carboxamide: step 1/1. This chain is Bifunctional purine biosynthesis protein PurH, found in Synechococcus sp. (strain CC9311).